The chain runs to 77 residues: Large ribosomal subunit protein eL20 (77 aa).

This sequence belongs to the eukaryotic ribosomal protein eL20 family. Part of the 50S ribosomal subunit. Binds 23S rRNA.

In Pyrococcus horikoshii (strain ATCC 700860 / DSM 12428 / JCM 9974 / NBRC 100139 / OT-3), this protein is Large ribosomal subunit protein eL20.